The following is a 318-amino-acid chain: MITDCFEADIAIPSGISRPDAAALQRCEGRVVFLPTIRRQLALADVAHESFVSGGVSPDTLGLLLAYRRRFPAVITRVLPTRIVACPVDLGLTHAGTVNLRNTSPVDLCNGDPVSLVPPVFEGQATDVRLESLDLTLRFPVPLPTPLAREIVARLVARGIRDLNPDPRTPGELPDLNVLYYNGARLSLVADVQQLASVNTELRSLVLNMVYSITEGTTLILTLIPRLLALSAQDGYVNALLQMQSVTREAAQLIHPEAPMLMQDGERRLPLYEALVAWLAHAGQLGDILALAPAVRVCTFDGAAVVQSGDMAPVIRYP.

The protein belongs to the herpesviridae TRX2 protein family. Interacts with TRX1 and major capisd protein/MCP.

The protein localises to the virion. It is found in the host nucleus. Its function is as follows. Structural component of the T=16 icosahedral capsid. The capsid is composed of pentamers and hexamers of major capsid protein/MCP, which are linked together by heterotrimers called triplexes. These triplexes are formed by a single molecule of triplex protein 1/TRX1 and two copies of triplex protein 2/TRX2. Additionally, TRX1 is required for efficient transport of TRX2 to the nucleus, which is the site of capsid assembly. This chain is Triplex capsid protein 2, found in Human herpesvirus 2 (strain HG52) (HHV-2).